A 227-amino-acid polypeptide reads, in one-letter code: Cytidylate kinase (227 aa).

7-15 (GPAGSGKST) lines the ATP pocket.

The protein belongs to the cytidylate kinase family. Type 1 subfamily.

Its subcellular location is the cytoplasm. It catalyses the reaction CMP + ATP = CDP + ADP. The catalysed reaction is dCMP + ATP = dCDP + ADP. The polypeptide is Cytidylate kinase (Salinibacter ruber (strain DSM 13855 / M31)).